The following is a 182-amino-acid chain: Keratin, type II cytoskeletal 60 kDa, component III (182 aa).

The region spanning 1–63 (ERGELALKDA…KLLEGEECRL (63 aa)) is the IF rod domain. The coil 2 stretch occupies residues 1-63 (ERGELALKDA…KLLEGEECRL (63 aa)). A tail region spans residues 63–182 (LSGEGVGPVN…TSSSRKSFKS (120 aa)). Residues 157-182 (FGSGGGSSSSVKFVSTTSSSRKSFKS) are disordered. The segment covering 164-182 (SSSVKFVSTTSSSRKSFKS) has biased composition (low complexity).

It belongs to the intermediate filament family. Heterotetramer of two type I and two type II keratins.

The sequence is that of Keratin, type II cytoskeletal 60 kDa, component III from Bos taurus (Bovine).